The chain runs to 208 residues: N-(5'-phosphoribosyl)anthranilate isomerase (208 aa).

This sequence belongs to the TrpF family.

It carries out the reaction N-(5-phospho-beta-D-ribosyl)anthranilate = 1-(2-carboxyphenylamino)-1-deoxy-D-ribulose 5-phosphate. Its pathway is amino-acid biosynthesis; L-tryptophan biosynthesis; L-tryptophan from chorismate: step 3/5. The sequence is that of N-(5'-phosphoribosyl)anthranilate isomerase from Chlamydia trachomatis serovar A (strain ATCC VR-571B / DSM 19440 / HAR-13).